A 229-amino-acid polypeptide reads, in one-letter code: 2,3-bisphosphoglycerate-dependent phosphoglycerate mutase (229 aa).

Substrate is bound by residues 8-15, 21-22, Arg-60, 87-90, Lys-98, 114-115, and 183-184; these read RHGKSEWN, TG, ERHY, RR, and GN. His-9 functions as the Tele-phosphohistidine intermediate in the catalytic mechanism. Glu-87 functions as the Proton donor/acceptor in the catalytic mechanism.

Belongs to the phosphoglycerate mutase family. BPG-dependent PGAM subfamily. Homodimer.

The enzyme catalyses (2R)-2-phosphoglycerate = (2R)-3-phosphoglycerate. The protein operates within carbohydrate degradation; glycolysis; pyruvate from D-glyceraldehyde 3-phosphate: step 3/5. In terms of biological role, catalyzes the interconversion of 2-phosphoglycerate and 3-phosphoglycerate. In Nautilia profundicola (strain ATCC BAA-1463 / DSM 18972 / AmH), this protein is 2,3-bisphosphoglycerate-dependent phosphoglycerate mutase.